Here is a 365-residue protein sequence, read N- to C-terminus: Histidinol-phosphate aminotransferase (365 aa).

At Lys-220 the chain carries N6-(pyridoxal phosphate)lysine.

The protein belongs to the class-II pyridoxal-phosphate-dependent aminotransferase family. Histidinol-phosphate aminotransferase subfamily. As to quaternary structure, homodimer. Pyridoxal 5'-phosphate is required as a cofactor.

It carries out the reaction L-histidinol phosphate + 2-oxoglutarate = 3-(imidazol-4-yl)-2-oxopropyl phosphate + L-glutamate. It participates in amino-acid biosynthesis; L-histidine biosynthesis; L-histidine from 5-phospho-alpha-D-ribose 1-diphosphate: step 7/9. This chain is Histidinol-phosphate aminotransferase, found in Neisseria meningitidis serogroup A / serotype 4A (strain DSM 15465 / Z2491).